The following is a 627-amino-acid chain: Dual specificity testis-specific protein kinase 1 (627 aa).

A disordered region spans residues 1–36 (MAGERPPLRGPGPGEAPGEGPGGAGGGPGRGRPSSY). The span at 11 to 30 (PGPGEAPGEGPGGAGGGPGR) shows a compositional bias: gly residues. In terms of domain architecture, Protein kinase spans 52–309 (FDCAEKIGAG…TEITQHLEQI (258 aa)). ATP-binding positions include 58–66 (IGAGFFSEV) and K81. D170 acts as the Proton acceptor in catalysis. Phosphoserine; by autocatalysis is present on S215. Residues 316–330 (ATPLAKPPLTKAPLT) show a composition bias toward low complexity. 4 disordered regions span residues 316–373 (ATPL…SWGD), 436–485 (RCRS…GLAP), 500–519 (CSSA…NNNP), and 532–565 (REPW…EPEE). Omega-N-methylarginine is present on R338. A compositionally biased stretch (basic and acidic residues) spans 348 to 357 (PDPRLSRSRS). Positions 421–525 (VTTPDILVQP…NNNPPAVVVN (105 aa)) are required for interaction with YWHAB. The interval 528–625 (QGWAREPWNR…PTPSLQLPGA (98 aa)) is required for interaction with PARVA. The segment at 528 to 627 (QGWAREPWNR…PSLQLPGARS (100 aa)) is required for interaction with SPRED1 and SPRY2. Required for TESK1-mediated dephosphorylation of SPRY2 and SPRY2 inhibition of ERK phosphorylation.

Belongs to the protein kinase superfamily. TKL Ser/Thr protein kinase family. As to quaternary structure, interacts (via both C- and N-termini) with SPRY4 (via C-terminus); the interaction inhibits TESK1 kinase activity. Interacts with TAOK1; the interaction inhibits TAOK1 kinase activity. Interacts (via C-terminus) with SPRED1 (via C-terminus); the interaction inhibits TESK1 kinase activity. Interacts (via C-terminus) with PARVA/PARVIN (via C-terminus); the interaction inhibits TESK1 kinase activity. Interacts with YWHAB/14-3-3 beta; the interaction is dependent on the phosphorylation of TESK1 Ser-439 and inhibits TESK1 kinase activity. Interacts with SPRY1, SPRY3 and SPRED2. Interacts (via C-terminus) with SPRY2 (via C-terminus); the interaction disrupts SPRY2 interaction with PPP2CA/PP2A-C, possibly by vesicular sequestration of SPRY2. Therefore dephosphorylation of SPRY2 by the serine/threonine-protein phosphatase 2A (PP2A) holoenzyme is lost, inhibiting its interaction with GRB2. Mg(2+) is required as a cofactor. It depends on Mn(2+) as a cofactor. Post-translationally, autophosphorylated on serine and tyrosine residues. As to expression, expressed in testes and brain (at protein level).

The protein localises to the cytoplasm. The protein resides in the perinuclear region. It is found in the cytoskeleton. It localises to the microtubule organizing center. Its subcellular location is the centrosome. The protein localises to the cell projection. The protein resides in the lamellipodium. The catalysed reaction is L-seryl-[protein] + ATP = O-phospho-L-seryl-[protein] + ADP + H(+). It carries out the reaction L-threonyl-[protein] + ATP = O-phospho-L-threonyl-[protein] + ADP + H(+). It catalyses the reaction L-tyrosyl-[protein] + ATP = O-phospho-L-tyrosyl-[protein] + ADP + H(+). With respect to regulation, activated by autophosphorylation on Ser-215. Kinase activity is inhibited by SPRED1. In terms of biological role, dual specificity protein kinase activity catalyzing autophosphorylation and phosphorylation of exogenous substrates on both serine/threonine and tyrosine residues. Regulates the cellular cytoskeleton by enhancing actin stress fiber formation via phosphorylation of cofilin and by preventing microtubule breakdown via inhibition of TAOK1/MARKK kinase activity. Inhibits podocyte motility via regulation of actin cytoskeletal dynamics and phosphorylation of CFL1. Positively regulates integrin-mediated cell spreading, via phosphorylation of cofilin. Suppresses ciliogenesis via multiple pathways; phosphorylation of CFL1, suppression of ciliary vesicle directional trafficking to the ciliary base, and by facilitating YAP1 nuclear localization where it acts as a transcriptional corepressor of the TEAD4 target genes AURKA and PLK1. Probably plays a central role at and after the meiotic phase of spermatogenesis. The chain is Dual specificity testis-specific protein kinase 1 (Tesk1) from Mus musculus (Mouse).